The following is a 265-amino-acid chain: Thiazole synthase (265 aa).

Residue Lys-103 is the Schiff-base intermediate with DXP of the active site. Residues Gly-164, 190–191 (AG), and 212–213 (NT) each bind 1-deoxy-D-xylulose 5-phosphate.

Belongs to the ThiG family. In terms of assembly, homotetramer. Forms heterodimers with either ThiH or ThiS.

The protein resides in the cytoplasm. It carries out the reaction [ThiS sulfur-carrier protein]-C-terminal-Gly-aminoethanethioate + 2-iminoacetate + 1-deoxy-D-xylulose 5-phosphate = [ThiS sulfur-carrier protein]-C-terminal Gly-Gly + 2-[(2R,5Z)-2-carboxy-4-methylthiazol-5(2H)-ylidene]ethyl phosphate + 2 H2O + H(+). The protein operates within cofactor biosynthesis; thiamine diphosphate biosynthesis. Functionally, catalyzes the rearrangement of 1-deoxy-D-xylulose 5-phosphate (DXP) to produce the thiazole phosphate moiety of thiamine. Sulfur is provided by the thiocarboxylate moiety of the carrier protein ThiS. In vitro, sulfur can be provided by H(2)S. In Bordetella bronchiseptica (strain ATCC BAA-588 / NCTC 13252 / RB50) (Alcaligenes bronchisepticus), this protein is Thiazole synthase.